A 160-amino-acid chain; its full sequence is Variant surface antigen C (160 aa).

The N-terminal stretch at 1-29 is a signal peptide; it reads MKKSIFSKKLLVSFGSLVALASIPLIAIS. A lipid anchor (N-palmitoyl cysteine) is attached at cysteine 30. Cysteine 30 carries the S-diacylglycerol cysteine lipid modification. Residues 32-160 are disordered; sequence QTNTDKSQQP…SSESGSQKTT (129 aa). Composition is skewed to low complexity over residues 38–54 and 62–87; these read SQQP…QSGT and SGTS…QTET. Repeat copies occupy residues 86–97, 98–109, 110–121, 122–133, 134–145, and 146–157. Residues 86–157 are 6 X 12 AA tandem repeats; that stretch reads ETAPKSPESG…APKSSESGSQ (72 aa). Polar residues predominate over residues 93 to 160; the sequence is ESGSQEATPK…SSESGSQKTT (68 aa).

It localises to the cell membrane. In terms of biological role, responsible for the antigenic diversity for host adaptation. In Mesomycoplasma hyorhinis (Mycoplasma hyorhinis), this protein is Variant surface antigen C (vlpC).